A 511-amino-acid polypeptide reads, in one-letter code: Inositol-3-phosphate synthase (511 aa).

24 residues coordinate NAD(+): G70, N71, N72, D143, S179, I180, Q190, R193, S230, A231, N232, T233, G281, S282, D306, T309, N340, N341, D342, K355, G393, D394, D422, and S423.

Belongs to the myo-inositol 1-phosphate synthase family. NAD(+) serves as cofactor.

It localises to the cytoplasm. The enzyme catalyses D-glucose 6-phosphate = 1D-myo-inositol 3-phosphate. Its pathway is polyol metabolism; myo-inositol biosynthesis; myo-inositol from D-glucose 6-phosphate: step 1/2. Functionally, key enzyme in myo-inositol biosynthesis pathway that catalyzes the conversion of glucose 6-phosphate to 1-myo-inositol 1-phosphate in a NAD-dependent manner. Rate-limiting enzyme in the synthesis of all inositol-containing compounds. The protein is Inositol-3-phosphate synthase (ino1) of Dictyostelium discoideum (Social amoeba).